A 392-amino-acid polypeptide reads, in one-letter code: Fasciculation and elongation protein zeta-1 (392 aa).

A disordered region spans residues 1–37 (MEAPLVSLDEEFEDLRPSCSEDPEEKPQCFYGSSPHH). A Phosphoserine modification is found at serine 58. The disordered stretch occupies residues 175-198 (MQNSPDPEEEEEVLEEEDGGETSS). Residues 180 to 194 (DPEEEEEVLEEEDGG) are compositionally biased toward acidic residues. Residues 230–298 (SELTELLDQV…KKRRKEKGLS (69 aa)) are a coiled coil. 2 positions are modified to phosphoserine: serine 298 and serine 316.

It belongs to the zygin family. In terms of assembly, homodimer; disulfide-linked. May form heterodimers with FEZ2. Interacts with the NH2-terminal variable region (V1) of PKC zeta and weakly with that of PKC epsilon. Interacts with UBE4B. Interacts with SAP30L. Interacts with SCOC and ULK1; SCOC interferes with ULK1-binding to FEZ1. Directly interacts with SCOC and UVRAG. Stabilizes the interaction between SCOC and UVRAG during amino acid starvation. In terms of processing, phosphorylated by protein kinase C zeta; which enhances interaction with UBE4B and polyubiquitination. Polyubiquitinated in a UBE4B-dependent manner; which does not lead to proteasomal degradation and may be important for neurogenic activity. Polyubiquitin linkage seems to be mainly through Lys-26. In terms of tissue distribution, mainly expressed in brain.

The protein resides in the cytoplasm. It localises to the cytoskeleton. The protein localises to the microtubule organizing center. It is found in the centrosome. Its subcellular location is the cell membrane. In terms of biological role, may be involved in axonal outgrowth as component of the network of molecules that regulate cellular morphology and axon guidance machinery. Able to restore partial locomotion and axonal fasciculation to C.elegans unc-76 mutants in germline transformation experiments. May participate in the transport of mitochondria and other cargos along microtubules. This Homo sapiens (Human) protein is Fasciculation and elongation protein zeta-1 (FEZ1).